Reading from the N-terminus, the 313-residue chain is MEEENATLLTEFVLTGFLYQPQWKIPLFLAFLVIYLITIMGNLGLIAVIWKDPHLHIPMYLLLGNLAFVDAWISSTVTPKMLNNFLAKSKMISLSECKIQFFSFAISVTTECFLLATMAYDRYVAICKPLLYPAIMTNGLCIRLLILSYVGGILHALIHEGFLFRLTFCNSNIVHHIYCDTIPLSKISCTDSSINFLMVFIFSGSIQVFSIVTILVSYTFVLFAILKKKSDKGVRKAFSTCGAHLFSVSLYYGPLLFIYVGPASPQADDQDMVEPLFYTVIIPLLNPIIYSLRNKQVTVSFTKMLKKHVKVSY.

Topologically, residues 1 to 28 (MEEENATLLTEFVLTGFLYQPQWKIPLF) are extracellular. Asparagine 5 carries N-linked (GlcNAc...) asparagine glycosylation. Residues 29 to 49 (LAFLVIYLITIMGNLGLIAVI) form a helical membrane-spanning segment. Topologically, residues 50–56 (WKDPHLH) are cytoplasmic. Residues 57-77 (IPMYLLLGNLAFVDAWISSTV) traverse the membrane as a helical segment. The Extracellular segment spans residues 78 to 98 (TPKMLNNFLAKSKMISLSECK). Cysteine 97 and cysteine 179 are joined by a disulfide. Residues 99-119 (IQFFSFAISVTTECFLLATMA) form a helical membrane-spanning segment. Topologically, residues 120-143 (YDRYVAICKPLLYPAIMTNGLCIR) are cytoplasmic. A helical membrane pass occupies residues 144–164 (LLILSYVGGILHALIHEGFLF). The Extracellular segment spans residues 165 to 195 (RLTFCNSNIVHHIYCDTIPLSKISCTDSSIN). A helical membrane pass occupies residues 196–216 (FLMVFIFSGSIQVFSIVTILV). The Cytoplasmic portion of the chain corresponds to 217–240 (SYTFVLFAILKKKSDKGVRKAFST). Residues 241–261 (CGAHLFSVSLYYGPLLFIYVG) form a helical membrane-spanning segment. Topologically, residues 262–271 (PASPQADDQD) are extracellular. A helical membrane pass occupies residues 272 to 292 (MVEPLFYTVIIPLLNPIIYSL). The Cytoplasmic segment spans residues 293–313 (RNKQVTVSFTKMLKKHVKVSY).

Belongs to the G-protein coupled receptor 1 family.

It localises to the cell membrane. Odorant receptor. The sequence is that of Olfactory receptor 5H1 (OR5H1) from Homo sapiens (Human).